Consider the following 161-residue polypeptide: Small ribosomal subunit protein uS15 (161 aa).

The segment covering 1–13 has biased composition (basic residues); that stretch reads MAGKRRKKGRSHS. The tract at residues 1–22 is disordered; sequence MAGKRRKKGRSHSTRPATPTVP.

This sequence belongs to the universal ribosomal protein uS15 family. As to quaternary structure, part of the 30S ribosomal subunit.

This Hyperthermus butylicus (strain DSM 5456 / JCM 9403 / PLM1-5) protein is Small ribosomal subunit protein uS15.